The primary structure comprises 66 residues: Protein translocase subunit SecE (66 aa).

The helical transmembrane segment at 29–49 (LVASTLVVVVAVFIFSLTCLV) threads the bilayer.

Belongs to the SecE/SEC61-gamma family. Component of the Sec protein translocase complex. Heterotrimer consisting of SecY, SecE and SecG subunits. The heterotrimers can form oligomers, although 1 heterotrimer is thought to be able to translocate proteins. Interacts with the ribosome. Interacts with SecDF, and other proteins may be involved. Interacts with SecA.

The protein resides in the cell inner membrane. Its function is as follows. Essential subunit of the Sec protein translocation channel SecYEG. Clamps together the 2 halves of SecY. May contact the channel plug during translocation. The protein is Protein translocase subunit SecE of Rickettsia rickettsii.